A 437-amino-acid polypeptide reads, in one-letter code: Eukaryotic peptide chain release factor subunit 1 (437 aa).

Positions 61–64 (NIKS) match the NIKS motif; plays an important role in translational termination motif.

The protein belongs to the eukaryotic release factor 1 family. Component of the eRF1-eRF3-GTP ternary complex, composed of ETF1/ERF1 and eRF3 (GSPT1/ERF3A or GSPT2/ERF3B) and GTP.

It localises to the cytoplasm. Component of the eRF1-eRF3-GTP ternary complex, a ternary complex that mediates translation termination in response to the termination codons. The eRF1-eRF3-GTP complex binds to a stop codon in the ribosomal A-site. ETF1/ERF1 is responsible for stop codon recognition and inducing hydrolysis of peptidyl-tRNA. Following GTP hydrolysis, eRF3 (GSPT1/ERF3A or GSPT2/ERF3B) dissociates, permitting ETF1/eRF1 to accommodate fully in the A-site, followed by hydrolysis of peptidyl-tRNA. The sequence is that of Eukaryotic peptide chain release factor subunit 1 (etf1) from Xenopus laevis (African clawed frog).